Here is a 325-residue protein sequence, read N- to C-terminus: uncharacterized protein (325 aa).

Residues 1–32 (MKQEYIPLDEFPNKSNEGMLNDEGTSSSGLST) are disordered. Positions 23 to 32 (EGTSSSGLST) are enriched in low complexity. Residues 135 to 223 (AEEISNLKTS…LKKREDLLRL (89 aa)) are a coiled coil.

It is found in the cytoplasm. The protein resides in the cytoskeleton. Its subcellular location is the microtubule organizing center. It localises to the spindle pole body. This is an uncharacterized protein from Schizosaccharomyces pombe (strain 972 / ATCC 24843) (Fission yeast).